A 249-amino-acid polypeptide reads, in one-letter code: Enolase-phosphatase E1 (249 aa).

It belongs to the HAD-like hydrolase superfamily. MasA/MtnC family. As to quaternary structure, monomer. It depends on Mg(2+) as a cofactor.

The enzyme catalyses 5-methylsulfanyl-2,3-dioxopentyl phosphate + H2O = 1,2-dihydroxy-5-(methylsulfanyl)pent-1-en-3-one + phosphate. The protein operates within amino-acid biosynthesis; L-methionine biosynthesis via salvage pathway; L-methionine from S-methyl-5-thio-alpha-D-ribose 1-phosphate: step 3/6. It participates in amino-acid biosynthesis; L-methionine biosynthesis via salvage pathway; L-methionine from S-methyl-5-thio-alpha-D-ribose 1-phosphate: step 4/6. In terms of biological role, bifunctional enzyme that catalyzes the enolization of 2,3-diketo-5-methylthiopentyl-1-phosphate (DK-MTP-1-P) into the intermediate 2-hydroxy-3-keto-5-methylthiopentenyl-1-phosphate (HK-MTPenyl-1-P), which is then dephosphorylated to form the acireductone 1,2-dihydroxy-3-keto-5-methylthiopentene (DHK-MTPene). In Pseudomonas aeruginosa (strain ATCC 15692 / DSM 22644 / CIP 104116 / JCM 14847 / LMG 12228 / 1C / PRS 101 / PAO1), this protein is Enolase-phosphatase E1.